Here is a 208-residue protein sequence, read N- to C-terminus: Large ribosomal subunit protein uL4 (208 aa).

The segment at 44–85 (RQGTKKTKTRAEVRGGGKKPWRQKGTGRARQGSIRAPHWRGG) is disordered. Residues 59–70 (GGKKPWRQKGTG) are compositionally biased toward basic residues.

It belongs to the universal ribosomal protein uL4 family. Part of the 50S ribosomal subunit.

One of the primary rRNA binding proteins, this protein initially binds near the 5'-end of the 23S rRNA. It is important during the early stages of 50S assembly. It makes multiple contacts with different domains of the 23S rRNA in the assembled 50S subunit and ribosome. In terms of biological role, forms part of the polypeptide exit tunnel. The protein is Large ribosomal subunit protein uL4 of Mesoplasma florum (strain ATCC 33453 / NBRC 100688 / NCTC 11704 / L1) (Acholeplasma florum).